The following is a 154-amino-acid chain: 6,7-dimethyl-8-ribityllumazine synthase (154 aa).

Residues Trp22, 56–58, and 80–82 each bind 5-amino-6-(D-ribitylamino)uracil; these read AWE and CVV. 85–86 contacts (2S)-2-hydroxy-3-oxobutyl phosphate; sequence DT. His88 serves as the catalytic Proton donor. Residue Asn113 participates in 5-amino-6-(D-ribitylamino)uracil binding. (2S)-2-hydroxy-3-oxobutyl phosphate is bound at residue Arg127.

The protein belongs to the DMRL synthase family. Forms an icosahedral capsid composed of 60 subunits, arranged as a dodecamer of pentamers.

It carries out the reaction (2S)-2-hydroxy-3-oxobutyl phosphate + 5-amino-6-(D-ribitylamino)uracil = 6,7-dimethyl-8-(1-D-ribityl)lumazine + phosphate + 2 H2O + H(+). The protein operates within cofactor biosynthesis; riboflavin biosynthesis; riboflavin from 2-hydroxy-3-oxobutyl phosphate and 5-amino-6-(D-ribitylamino)uracil: step 1/2. Catalyzes the formation of 6,7-dimethyl-8-ribityllumazine by condensation of 5-amino-6-(D-ribitylamino)uracil with 3,4-dihydroxy-2-butanone 4-phosphate. This is the penultimate step in the biosynthesis of riboflavin. This Xylella fastidiosa (strain 9a5c) protein is 6,7-dimethyl-8-ribityllumazine synthase.